Reading from the N-terminus, the 89-residue chain is Large ribosomal subunit protein bL27 (89 aa).

The protein belongs to the bacterial ribosomal protein bL27 family.

The polypeptide is Large ribosomal subunit protein bL27 (Synechococcus sp. (strain JA-3-3Ab) (Cyanobacteria bacterium Yellowstone A-Prime)).